Consider the following 120-residue polypeptide: Ribosomal protein eL22-like 1 (120 aa).

The protein belongs to the eukaryotic ribosomal protein eL22 family.

The sequence is that of Ribosomal protein eL22-like 1 (rpl22l1) from Xenopus tropicalis (Western clawed frog).